The primary structure comprises 198 residues: 8-oxoguanine DNA glycosylase/AP lyase (198 aa).

Active-site residues include Lys-122 and Asp-140.

This sequence belongs to the type-2 OGG1 family. In terms of assembly, monomer.

The enzyme catalyses 2'-deoxyribonucleotide-(2'-deoxyribose 5'-phosphate)-2'-deoxyribonucleotide-DNA = a 3'-end 2'-deoxyribonucleotide-(2,3-dehydro-2,3-deoxyribose 5'-phosphate)-DNA + a 5'-end 5'-phospho-2'-deoxyribonucleoside-DNA + H(+). Functionally, catalyzes the excision of an oxidatively damaged form of guanine (7,8-dihydro-8-oxoguanine = 8-oxoG) from DNA. Also cleaves the DNA backbone at apurinic/apyrimidinic sites (AP sites). Efficiently cleaves oligomers containing 8-oxoG:C and 8-oxoG:G base pairs, and is less effective on oligomers containing 8-oxoG:T and 8-oxoG:A mispairs. The polypeptide is 8-oxoguanine DNA glycosylase/AP lyase (Archaeoglobus fulgidus (strain ATCC 49558 / DSM 4304 / JCM 9628 / NBRC 100126 / VC-16)).